A 377-amino-acid chain; its full sequence is Chaperone protein DnaJ (377 aa).

Residues 8–73 enclose the J domain; that stretch reads CYYETLEVER…DKRAAYDRFG (66 aa). The CR-type zinc-finger motif lies at 135 to 213; it reads GKTAQIEIPV…CSGQGRVTRE (79 aa). Cys148, Cys151, Cys165, Cys168, Cys187, Cys190, Cys201, and Cys204 together coordinate Zn(2+). 4 CXXCXGXG motif repeats span residues 148 to 155, 165 to 172, 187 to 194, and 201 to 208; these read CEACSGIG, CSTCGGAG, CPGCQGRG, and CPSCSGQG.

Belongs to the DnaJ family. Homodimer. Requires Zn(2+) as cofactor.

The protein resides in the cytoplasm. Participates actively in the response to hyperosmotic and heat shock by preventing the aggregation of stress-denatured proteins and by disaggregating proteins, also in an autonomous, DnaK-independent fashion. Unfolded proteins bind initially to DnaJ; upon interaction with the DnaJ-bound protein, DnaK hydrolyzes its bound ATP, resulting in the formation of a stable complex. GrpE releases ADP from DnaK; ATP binding to DnaK triggers the release of the substrate protein, thus completing the reaction cycle. Several rounds of ATP-dependent interactions between DnaJ, DnaK and GrpE are required for fully efficient folding. Also involved, together with DnaK and GrpE, in the DNA replication of plasmids through activation of initiation proteins. This chain is Chaperone protein DnaJ, found in Bradyrhizobium diazoefficiens (strain JCM 10833 / BCRC 13528 / IAM 13628 / NBRC 14792 / USDA 110).